A 326-amino-acid chain; its full sequence is 4-hydroxythreonine-4-phosphate dehydrogenase (326 aa).

Substrate is bound at residue Thr132. A divalent metal cation contacts are provided by His160, His205, and His260. Positions 268, 277, and 286 each coordinate substrate.

Belongs to the PdxA family. In terms of assembly, homodimer. It depends on Zn(2+) as a cofactor. Mg(2+) is required as a cofactor. The cofactor is Co(2+).

The protein localises to the cytoplasm. The catalysed reaction is 4-(phosphooxy)-L-threonine + NAD(+) = 3-amino-2-oxopropyl phosphate + CO2 + NADH. Its pathway is cofactor biosynthesis; pyridoxine 5'-phosphate biosynthesis; pyridoxine 5'-phosphate from D-erythrose 4-phosphate: step 4/5. Functionally, catalyzes the NAD(P)-dependent oxidation of 4-(phosphooxy)-L-threonine (HTP) into 2-amino-3-oxo-4-(phosphooxy)butyric acid which spontaneously decarboxylates to form 3-amino-2-oxopropyl phosphate (AHAP). This chain is 4-hydroxythreonine-4-phosphate dehydrogenase, found in Stenotrophomonas maltophilia (strain K279a).